Consider the following 200-residue polypeptide: Potassium-transporting ATPase KdpC subunit (200 aa).

A helical transmembrane segment spans residues 7–27 (PALVMIVLFTILTGLIYPLAM).

It belongs to the KdpC family. In terms of assembly, the system is composed of three essential subunits: KdpA, KdpB and KdpC.

It localises to the cell inner membrane. In terms of biological role, part of the high-affinity ATP-driven potassium transport (or Kdp) system, which catalyzes the hydrolysis of ATP coupled with the electrogenic transport of potassium into the cytoplasm. This subunit acts as a catalytic chaperone that increases the ATP-binding affinity of the ATP-hydrolyzing subunit KdpB by the formation of a transient KdpB/KdpC/ATP ternary complex. The chain is Potassium-transporting ATPase KdpC subunit from Methylocella silvestris (strain DSM 15510 / CIP 108128 / LMG 27833 / NCIMB 13906 / BL2).